Consider the following 86-residue polypeptide: Small ribosomal subunit protein bS20 (86 aa).

A disordered region spans residues 1 to 25 (MTNIKSQQKRNRTNERARLRNKSVK).

The protein belongs to the bacterial ribosomal protein bS20 family.

In terms of biological role, binds directly to 16S ribosomal RNA. The protein is Small ribosomal subunit protein bS20 of Mycobacterium leprae (strain Br4923).